Consider the following 378-residue polypeptide: Fetuin-B (378 aa).

Residues 1 to 18 (MGVLRLLVLCTLAACCVA) form the signal peptide. Cystatin fetuin-B-type domains are found at residues 28–141 (NAPF…YNCT) and 152–261 (SMCP…VSCE). Residue Asn40 is glycosylated (N-linked (GlcNAc...) asparagine). 5 cysteine pairs are disulfide-bonded: Cys96-Cys107, Cys120-Cys140, Cys154-Cys157, Cys217-Cys224, and Cys237-Cys260. Asn139 carries an N-linked (GlcNAc...) asparagine glycan. 2 disordered regions span residues 266-338 (QDQV…PQGD) and 357-378 (LPFP…QRTP). The span at 286-297 (QKNTAPTSSPSI) shows a compositional bias: polar residues. 2 O-linked (GalNAc...) threonine glycosylation sites follow: Thr289 and Thr292. Ser316 bears the Phosphoserine mark. A compositionally biased stretch (basic and acidic residues) spans 362-378 (KEQRSPECPGPEKQRTP).

Belongs to the fetuin family. In terms of tissue distribution, liver.

It localises to the secreted. Functionally, protease inhibitor required for egg fertilization. Required to prevent premature zona pellucida hardening before fertilization, probably by inhibiting the protease activity of ASTL, a protease that mediates the cleavage of ZP2 and triggers zona pellucida hardening. This chain is Fetuin-B (Fetub), found in Rattus norvegicus (Rat).